The chain runs to 110 residues: Keratin, type I cytoskeletal 19 (110 aa).

A head region spans residues 1 to 8 (FGSGGVFR). Residue serine 3 is modified to Phosphoserine. The region spanning 7–110 (FRITMQNLND…KLEQEIATYR (104 aa)) is the IF rod domain. The residue at position 8 (arginine 8) is an Omega-N-methylarginine. Residues 9–42 (ITMQNLNDRLASYLDKVRALEQANGELEVKIRDW) form a coil 1A region. Residues 43–45 (YQK) form a linker 1 region. The tract at residues 46–83 (IVLQIDNARTKFETEQALRVLDELTLARKNHEEEISAL) is coil 1B. The coil 2 stretch occupies residues 85 to 110 (ADTERQNQEYQQLMDIKLEQEIATYR). Residues 85-110 (ADTERQNQEYQQLMDIKLEQEIATYR) form a necessary for interaction with PNN region.

Belongs to the intermediate filament family. As to quaternary structure, heterotetramer of two type I and two type II keratins. Interacts with PNN and the actin-binding domain of DMD.

Its function is as follows. Involved in the organization of myofibers. Together with KRT8, helps to link the contractile apparatus to dystrophin at the costameres of striated muscle. The sequence is that of Keratin, type I cytoskeletal 19 from Mesocricetus auratus (Golden hamster).